Reading from the N-terminus, the 255-residue chain is MSDYIVVKCGGSMLNQLNDVFFECIKKLQQKYKVVIVHGGGPEIDAKLKDCNINVEKRDGLRITPKEVMDVVQMVLCGSTNKKLVMNLQKHNLLAVGCSGCDGNLLQIQPVSEEIGYVGEVSYVETALLKGLINMEYIPVIAPIGVNGNEIYNINADNAAAGIAAALGAKELVFITDVDGILHEGNLVKETDESEIATFIETGVITGGMIPKVQAALASLKMGVQKISIVNGTKDFTEVTGECIGTTVTKGVSIA.

Substrate is bound by residues 40 to 41 (GG), Arg62, and Asn153.

The protein belongs to the acetylglutamate kinase family. ArgB subfamily.

Its subcellular location is the cytoplasm. The enzyme catalyses N-acetyl-L-glutamate + ATP = N-acetyl-L-glutamyl 5-phosphate + ADP. Its pathway is amino-acid biosynthesis; L-arginine biosynthesis; N(2)-acetyl-L-ornithine from L-glutamate: step 2/4. Catalyzes the ATP-dependent phosphorylation of N-acetyl-L-glutamate. The polypeptide is Acetylglutamate kinase (Bacillus cereus (strain ATCC 14579 / DSM 31 / CCUG 7414 / JCM 2152 / NBRC 15305 / NCIMB 9373 / NCTC 2599 / NRRL B-3711)).